Reading from the N-terminus, the 968-residue chain is Phosphatidylserine decarboxylase 2 proenzyme (968 aa).

The first 25 residues, 1 to 25, serve as a signal peptide directing secretion; it reads MAKVMRLIIFVCVALVAISVPAASS. Active-site charge relay system; for autoendoproteolytic cleavage activity residues include D500, H570, and S683. The active-site Schiff-base intermediate with substrate; via pyruvic acid; for decarboxylase activity is the S683. S683 bears the Pyruvic acid (Ser); by autocatalysis mark.

The protein belongs to the phosphatidylserine decarboxylase family. Heterodimer of a large membrane-associated beta subunit and a small pyruvoyl-containing alpha subunit. Requires pyruvate as cofactor. In terms of processing, is synthesized initially as an inactive proenzyme. Formation of the active enzyme involves a self-maturation process in which the active site pyruvoyl group is generated from an internal serine residue via an autocatalytic post-translational modification. Two non-identical subunits are generated from the proenzyme in this reaction, and the pyruvate is formed at the N-terminus of the alpha chain, which is derived from the carboxyl end of the proenzyme. The autoendoproteolytic cleavage occurs by a canonical serine protease mechanism, in which the side chain hydroxyl group of the serine supplies its oxygen atom to form the C-terminus of the beta chain, while the remainder of the serine residue undergoes an oxidative deamination to produce ammonia and the pyruvoyl prosthetic group on the alpha chain. During this reaction, the Ser that is part of the protease active site of the proenzyme becomes the pyruvoyl prosthetic group, which constitutes an essential element of the active site of the mature decarboxylase.

It is found in the parasitophorous vacuole. The protein localises to the cytoplasmic vesicle. The protein resides in the secretory vesicle. It carries out the reaction a 1,2-diacyl-sn-glycero-3-phospho-L-serine + H(+) = a 1,2-diacyl-sn-glycero-3-phosphoethanolamine + CO2. It participates in phospholipid metabolism; phosphatidylethanolamine biosynthesis; phosphatidylethanolamine from CDP-diacylglycerol: step 2/2. Catalyzes the formation of phosphatidylethanolamine (PtdEtn) from phosphatidylserine (PtdSer). Plays a central role in phospholipid metabolism and in the interorganelle trafficking of phosphatidylserine. Can act on liposomal and host cell PtdSer. This is Phosphatidylserine decarboxylase 2 proenzyme from Toxoplasma gondii (strain ATCC 50853 / GT1).